Reading from the N-terminus, the 100-residue chain is Large ribosomal subunit protein bL21 (100 aa).

Belongs to the bacterial ribosomal protein bL21 family. As to quaternary structure, part of the 50S ribosomal subunit. Contacts protein L20.

In terms of biological role, this protein binds to 23S rRNA in the presence of protein L20. The polypeptide is Large ribosomal subunit protein bL21 (Wolbachia pipientis wMel).